We begin with the raw amino-acid sequence, 549 residues long: DDB1- and CUL4-associated factor 11 (549 aa).

The span at 1 to 24 shows a compositional bias: low complexity; the sequence is MGSRNSSSAGSGSLEPSEGLSRRG. Residues 1–40 form a disordered region; that stretch reads MGSRNSSSAGSGSLEPSEGLSRRGTGLRRSEEEEEEDEDV. Phosphoserine is present on residues serine 73 and serine 75. WD repeat units lie at residues 170 to 210, 216 to 258, 263 to 302, 305 to 345, 353 to 392, 435 to 480, and 481 to 520; these read TYSQ…HKFK, DVGW…TALD, ERRF…RTLQ, SHED…EDDP, GHQD…SREG, GVLH…KKLT, and NHKA…YFQD.

In terms of assembly, interacts with DDB1 and CUL4A.

It functions in the pathway protein modification; protein ubiquitination. In terms of biological role, may function as a substrate receptor for CUL4-DDB1 E3 ubiquitin-protein ligase complex. The polypeptide is DDB1- and CUL4-associated factor 11 (Dcaf11) (Mus musculus (Mouse)).